A 258-amino-acid chain; its full sequence is Acetylglutamate kinase (258 aa).

Substrate-binding positions include G44–G45, R66, and N158. Residues D181–L186 and I209–T211 each bind ATP.

Belongs to the acetylglutamate kinase family. ArgB subfamily. As to quaternary structure, homodimer.

It localises to the cytoplasm. The enzyme catalyses N-acetyl-L-glutamate + ATP = N-acetyl-L-glutamyl 5-phosphate + ADP. It functions in the pathway amino-acid biosynthesis; L-arginine biosynthesis; N(2)-acetyl-L-ornithine from L-glutamate: step 2/4. Its function is as follows. Catalyzes the ATP-dependent phosphorylation of N-acetyl-L-glutamate. The protein is Acetylglutamate kinase of Salmonella paratyphi A (strain ATCC 9150 / SARB42).